The chain runs to 355 residues: UDP-N-acetylglucosamine--N-acetylmuramyl-(pentapeptide) pyrophosphoryl-undecaprenol N-acetylglucosamine transferase (355 aa).

UDP-N-acetyl-alpha-D-glucosamine contacts are provided by residues 15–17 (TGG), asparagine 127, arginine 163, serine 191, isoleucine 244, 263–268 (ALTVSE), and glutamine 288.

This sequence belongs to the glycosyltransferase 28 family. MurG subfamily.

The protein resides in the cell inner membrane. It catalyses the reaction di-trans,octa-cis-undecaprenyl diphospho-N-acetyl-alpha-D-muramoyl-L-alanyl-D-glutamyl-meso-2,6-diaminopimeloyl-D-alanyl-D-alanine + UDP-N-acetyl-alpha-D-glucosamine = di-trans,octa-cis-undecaprenyl diphospho-[N-acetyl-alpha-D-glucosaminyl-(1-&gt;4)]-N-acetyl-alpha-D-muramoyl-L-alanyl-D-glutamyl-meso-2,6-diaminopimeloyl-D-alanyl-D-alanine + UDP + H(+). It functions in the pathway cell wall biogenesis; peptidoglycan biosynthesis. Cell wall formation. Catalyzes the transfer of a GlcNAc subunit on undecaprenyl-pyrophosphoryl-MurNAc-pentapeptide (lipid intermediate I) to form undecaprenyl-pyrophosphoryl-MurNAc-(pentapeptide)GlcNAc (lipid intermediate II). This Salmonella typhi protein is UDP-N-acetylglucosamine--N-acetylmuramyl-(pentapeptide) pyrophosphoryl-undecaprenol N-acetylglucosamine transferase.